We begin with the raw amino-acid sequence, 807 residues long: Leucine-rich repeat-containing protein 41 (807 aa).

The interval 45–54 (ALFELCGRAV) is interaction with Elongin BC complex. A phosphoserine mark is found at serine 155, serine 276, and serine 326. Disordered regions lie at residues 269–290 (ASRG…RRPR), 304–335 (TRRK…AIGG), and 349–403 (ASGT…GSGA). Threonine 327 is subject to Phosphothreonine. Positions 352 to 381 (TKQPSAPAAASASSSTSSKRAPASSASQPK) are enriched in low complexity. Residue serine 368 is modified to Phosphoserine. Residues 382 to 396 (PLKRFKRAAGKKGPR) are compositionally biased toward basic residues. 7 LRR repeats span residues 482-502 (WVSL…IFRL), 513-525 (AGCR…LSDL), 526-550 (FSPL…VLSI), 608-632 (SGSL…LVLQ), 638-661 (NLSL…VLFL), 696-723 (NSTL…VFSE), and 726-747 (SSSL…LLEF).

As to quaternary structure, part of an E3 ubiquitin-protein ligase complex with Elongin BC (ELOB and ELOC), RBX1 and CUL5. Component of a probable ECS(LRRC41) complex which contains CUL5, RNF7/RBX2, Elongin BC and LRRC41. Interacts with CUL5, RNF7, ELOB and ELOC.

The protein operates within protein modification; protein ubiquitination. Functionally, probable substrate recognition component of an ECS (Elongin BC-CUL2/5-SOCS-box protein) E3 ubiquitin ligase complex which mediates the ubiquitination and subsequent proteasomal degradation of target proteins. This Mus musculus (Mouse) protein is Leucine-rich repeat-containing protein 41 (Lrrc41).